The primary structure comprises 119 residues: Holo-[acyl-carrier-protein] synthase (119 aa).

Mg(2+)-binding residues include aspartate 7 and glutamate 56.

Belongs to the P-Pant transferase superfamily. AcpS family. Mg(2+) is required as a cofactor.

The protein resides in the cytoplasm. The catalysed reaction is apo-[ACP] + CoA = holo-[ACP] + adenosine 3',5'-bisphosphate + H(+). Its function is as follows. Transfers the 4'-phosphopantetheine moiety from coenzyme A to a Ser of acyl-carrier-protein. The sequence is that of Holo-[acyl-carrier-protein] synthase from Chlamydia trachomatis serovar D (strain ATCC VR-885 / DSM 19411 / UW-3/Cx).